The sequence spans 23 residues: Alyteserin-1b (23 aa).

Asparagine 23 is subject to Asparagine amide.

In terms of tissue distribution, expressed by the skin glands.

The protein resides in the secreted. It localises to the target cell membrane. Its function is as follows. Antibacterial peptide with amphipathic alpha-helical structure. Shows selective growth inhibitory activity against the Gram-negative bacteria E.coli (MIC=25 uM). Has a weak hemolytic activity against human erythrocytes (LC(50)=200 uM). Is not active against S.aureus (MIC=200 uM). In Alytes obstetricans (Common midwife toad), this protein is Alyteserin-1b.